Consider the following 145-residue polypeptide: Bacilliredoxin BH2759 (145 aa).

Belongs to the bacilliredoxin family.

The protein is Bacilliredoxin BH2759 of Halalkalibacterium halodurans (strain ATCC BAA-125 / DSM 18197 / FERM 7344 / JCM 9153 / C-125) (Bacillus halodurans).